The following is a 563-amino-acid chain: Envelope glycoprotein (563 aa).

The first 18 residues, 1 to 18, serve as a signal peptide directing secretion; the sequence is MGFTTKIIFLYNLVLVYA. Residues 19–503 lie on the Extracellular side of the membrane; the sequence is GFDDPRKAIE…SNPLWTGLQG (485 aa). Asparagine 113, asparagine 219, and asparagine 229 each carry an N-linked (GlcNAc...) asparagine; by host glycan. The CXXC signature appears at 236 to 239; the sequence is CWLC. 3 cysteine pairs are disulfide-bonded: cysteine 236-cysteine 239, cysteine 236-cysteine 465, and cysteine 457-cysteine 464. 7 N-linked (GlcNAc...) asparagine; by host glycosylation sites follow: asparagine 264, asparagine 282, asparagine 292, asparagine 306, asparagine 312, asparagine 321, and asparagine 339. Residues 380-400 form a fusion peptide region; sequence FIPLLAGLGITAAFTTGATGL. Coiled coils occupy residues 401-451 and 461-497; these read GVSV…LLTA and QEKC…SNPL. Residues 440–456 form an immunosuppression region; the sequence is LQNRRGLDLLTAEQGGI. Positions 457–465 match the CX6CC motif; the sequence is CLALQEKCC. Asparagine 469 is a glycosylation site (N-linked (GlcNAc...) asparagine; by host). Residues 504 to 524 form a helical membrane-spanning segment; the sequence is LLPYLLPFLGPLLTLLLLLTI. Over 525–563 the chain is Cytoplasmic; that stretch reads GPCIFNRLTAFINDKLNIIHAMVLTQQYQVLRTDEEAQD. Cysteine 527 carries the S-palmitoyl cysteine; by host lipid modification. The short motif at 552–555 is the YXXL motif; contains endocytosis signal element; the sequence is YQVL.

The mature envelope protein (Env) consists of a trimer of SU-TM heterodimers attached by a labile interchain disulfide bond. Post-translationally, specific enzymatic cleavages in vivo yield mature proteins. Envelope glycoproteins are synthesized as an inactive precursor that is N-glycosylated and processed likely by host cell furin or by a furin-like protease in the Golgi to yield the mature SU and TM proteins. The cleavage site between SU and TM requires the minimal sequence [KR]-X-[KR]-R. The R-peptide is released from the C-terminus of the cytoplasmic tail of the TM protein upon particle formation as a result of proteolytic cleavage by the viral protease. Cleavage of this peptide is required for TM to become fusogenic. The CXXC motif is highly conserved across a broad range of retroviral envelope proteins. It is thought to participate in the formation of a labile disulfide bond possibly with the CX6CC motif present in the transmembrane protein. Isomerization of the intersubunit disulfide bond to an SU intrachain disulfide bond is thought to occur upon receptor recognition in order to allow membrane fusion. In terms of processing, the transmembrane protein is palmitoylated.

It is found in the virion membrane. It localises to the host cell membrane. In terms of biological role, the surface protein (SU) attaches the virus to the host cell by binding to its receptor. This interaction triggers the refolding of the transmembrane protein (TM) and is thought to activate its fusogenic potential by unmasking its fusion peptide. Fusion occurs at the host cell plasma membrane. Its function is as follows. The transmembrane protein (TM) acts as a class I viral fusion protein. Under the current model, the protein has at least 3 conformational states: pre-fusion native state, pre-hairpin intermediate state, and post-fusion hairpin state. During viral and target cell membrane fusion, the coiled coil regions (heptad repeats) assume a trimer-of-hairpins structure, positioning the fusion peptide in close proximity to the C-terminal region of the ectodomain. The formation of this structure appears to drive apposition and subsequent fusion of viral and target cell membranes. Membranes fusion leads to delivery of the nucleocapsid into the cytoplasm. The sequence is that of Envelope glycoprotein (env) from Baboon endogenous virus (strain M7).